The following is a 91-amino-acid chain: MARTVQCVYLGKEAEGLDFQLYPGELGKRIFDTISKEAWGEWQKKQTMLINEKKLNMMNMDHRKLLEEQMQLFLFEGKDVQIEGYVPPKPE.

Belongs to the Fe(2+)-trafficking protein family.

In terms of biological role, could be a mediator in iron transactions between iron acquisition and iron-requiring processes, such as synthesis and/or repair of Fe-S clusters in biosynthetic enzymes. This Shewanella amazonensis (strain ATCC BAA-1098 / SB2B) protein is Probable Fe(2+)-trafficking protein.